Here is a 170-residue protein sequence, read N- to C-terminus: MPTSTGAQRLAELLAPVVAGQGLDLEGVTLLDHRTSAHLRIVVDKDGGVQLDEIAAASQAISHFLDNDAEADAIIGPRSYTLEVSSPGIDRPLVEPRHWRRAIGRLVRVQLPDLGPVVARVQDVTGDQVRLGIEWQYTDDGACVRQYEERTVAIAEVRPGQIEVEFEEHP.

It belongs to the RimP family.

It is found in the cytoplasm. In terms of biological role, required for maturation of 30S ribosomal subunits. The sequence is that of Ribosome maturation factor RimP from Acidothermus cellulolyticus (strain ATCC 43068 / DSM 8971 / 11B).